A 213-amino-acid polypeptide reads, in one-letter code: Small ribosomal subunit protein uS3 (213 aa).

A KH type-2 domain is found at 38–106 (IRKYVKEKIF…EFALEVSEIR (69 aa)).

Belongs to the universal ribosomal protein uS3 family. Part of the 30S ribosomal subunit. Forms a tight complex with proteins S10 and S14.

Its function is as follows. Binds the lower part of the 30S subunit head. Binds mRNA in the 70S ribosome, positioning it for translation. This chain is Small ribosomal subunit protein uS3, found in Maridesulfovibrio salexigens (strain ATCC 14822 / DSM 2638 / NCIMB 8403 / VKM B-1763) (Desulfovibrio salexigens).